The following is a 527-amino-acid chain: EGF domain-specific O-linked N-acetylglucosamine transferase (527 aa).

An N-terminal signal peptide occupies residues methionine 1–serine 17. The short motif at aspartate 295 to aspartate 297 is the Required for optimal activity element. An N-linked (GlcNAc...) asparagine glycan is attached at asparagine 354. Residues histidine 524–leucine 527 carry the Prevents secretion from ER motif.

Belongs to the glycosyltransferase 61 family.

It is found in the endoplasmic reticulum lumen. It catalyses the reaction L-seryl-[protein] + UDP-N-acetyl-alpha-D-glucosamine = 3-O-(N-acetyl-beta-D-glucosaminyl)-L-seryl-[protein] + UDP + H(+). The catalysed reaction is L-threonyl-[protein] + UDP-N-acetyl-alpha-D-glucosamine = 3-O-(N-acetyl-beta-D-glucosaminyl)-L-threonyl-[protein] + UDP + H(+). Catalyzes the transfer of a single N-acetylglucosamine from UDP-GlcNAc to a serine or threonine residue in extracellular proteins resulting in their modification with a beta-linked N-acetylglucosamine (O-GlcNAc). Specifically glycosylates the Thr residue located between the fifth and sixth conserved cysteines of folded EGF-like domains. In Pan troglodytes (Chimpanzee), this protein is EGF domain-specific O-linked N-acetylglucosamine transferase (EOGT).